Reading from the N-terminus, the 209-residue chain is uncharacterized protein (209 aa).

Residues 1–199 (MQVFLDLDET…DELKRVTASL (199 aa)) form the FCP1 homology domain.

This is an uncharacterized protein from Dryophytes versicolor (chameleon treefrog).